The chain runs to 62 residues: Photosystem II reaction center protein Z (62 aa).

Transmembrane regions (helical) follow at residues 8-28 (AVFA…VVFA) and 41-61 (FSGT…NSLI).

Belongs to the PsbZ family. In terms of assembly, PSII is composed of 1 copy each of membrane proteins PsbA, PsbB, PsbC, PsbD, PsbE, PsbF, PsbH, PsbI, PsbJ, PsbK, PsbL, PsbM, PsbT, PsbY, PsbZ, Psb30/Ycf12, at least 3 peripheral proteins of the oxygen-evolving complex and a large number of cofactors. It forms dimeric complexes.

Its subcellular location is the plastid. The protein localises to the chloroplast thylakoid membrane. Its function is as follows. May control the interaction of photosystem II (PSII) cores with the light-harvesting antenna, regulates electron flow through the 2 photosystem reaction centers. PSII is a light-driven water plastoquinone oxidoreductase, using light energy to abstract electrons from H(2)O, generating a proton gradient subsequently used for ATP formation. This chain is Photosystem II reaction center protein Z, found in Amborella trichopoda.